Here is a 96-residue protein sequence, read N- to C-terminus: Large ribosomal subunit protein bL21 (96 aa).

This sequence belongs to the bacterial ribosomal protein bL21 family. As to quaternary structure, part of the 50S ribosomal subunit. Contacts protein L20.

This protein binds to 23S rRNA in the presence of protein L20. In Chlorobium phaeobacteroides (strain BS1), this protein is Large ribosomal subunit protein bL21.